The primary structure comprises 819 residues: Hypoxia-inducible factor 1-alpha (819 aa).

The tract at residues 1–31 (MEGAAGGEEKKNRMSSERRKEKSRDAARSRR) is disordered. The tract at residues 1–402 (MEGAAGGEEK…KEPDALTLLA (402 aa)) is interaction with TSGA10. The span at 7 to 31 (GEEKKNRMSSERRKEKSRDAARSRR) shows a compositional bias: basic and acidic residues. The region spanning 18–71 (RRKEKSRDAARSRRSKESEVFYELAHQLPLPHNVSSHLDKASVMRLTISYLRVR) is the bHLH domain. Positions 22–31 (KSRDAARSRR) are DNA-binding. One can recognise a PAS 1 domain in the interval 86-159 (KAQMNCFYLK…THRNGPIKKG (74 aa)). A required for heterodimer formation with ARNT region spans residues 171-192 (RMKCTLTSRGRTMNIKSATWKV). Residues 229-299 (PHPSNIEIPL…KTHHDMFTKG (71 aa)) form the PAS 2 domain. Ser248 bears the Phosphoserine; by CK1 mark. Residues 303 to 346 (TGQYRMLAKRGGYVWVETQATVIYNTKNSQPQCIVCVNYVVSGI) form the PAC domain. Positions 402–599 (APAAGDTIIS…NPPSVSTAFQ (198 aa)) are ODD. Pro403 is subject to 4-hydroxyproline. Polar residues predominate over residues 495 to 518 (IQDQPASPSDGSTRQSSPEPNSPS). The interval 495–521 (IQDQPASPSDGSTRQSSPEPNSPSEYC) is disordered. Residues 532-576 (FKLELVEKLFAEDTEAKNPFSTQDTDLDLEMLAPYIPMDDDFQLR) form an NTAD region. Lys533 carries the post-translational modification N6-acetyllysine; alternate. Residue Lys533 forms a Glycyl lysine isopeptide (Lys-Gly) (interchain with G-Cter in ubiquitin); alternate linkage. Residues Lys539 and Lys548 each participate in a glycyl lysine isopeptide (Lys-Gly) (interchain with G-Cter in ubiquitin) cross-link. At Ser552 the chain carries Phosphoserine; by GSK3-beta. Residue Thr556 is modified to Phosphothreonine; by GSK3-beta. Pro565 bears the 4-hydroxyproline mark. Residue Ser577 is modified to Phosphoserine; by PLK3. The tract at residues 577–778 (SFDQLSPLES…SDLACRLLGQ (202 aa)) is ID. The disordered stretch occupies residues 581–685 (LSPLESSSPN…SHPRSPNVLS (105 aa)). A compositionally biased stretch (low complexity) spans 582-613 (SPLESSSPNPPSVSTAFQQTQLQEPTITTTTT). Basic and acidic residues predominate over residues 614 to 628 (EELKTVTKDSTEDIK). A compositionally biased stretch (low complexity) spans 632–655 (TSPSSTHTPKETTTATTSSPYSGT). Residue Ser650 is modified to Phosphoserine; by PLK3. Position 702 is an N6-acetyllysine (Lys702). Positions 711-717 (RKRKMEH) match the Nuclear localization signal motif. The CTAD stretch occupies residues 779-819 (SMDGSGLPQLTSYDCEVNAPIQGSRNLLQGEELLRALDQVN). Cys793 is modified (S-nitrosocysteine). Asn796 is modified ((3S)-3-hydroxyasparagine).

In terms of assembly, interacts with the ARNT; forms a heterodimer that binds core DNA sequence 5'-TACGTG-3' within the hypoxia response element (HRE) of target gene promoters. Interacts with COPS5; the interaction increases the transcriptional activity of HIF1A through increased stability. Interacts with EP300 (via TAZ-type 1 domains); the interaction is stimulated in response to hypoxia and inhibited by CITED2. Interacts with CREBBP (via TAZ-type 1 domains). Interacts with NCOA1, NCOA2, APEX1 and HSP90. Interacts (hydroxylated within the ODD domain) with VHLL (via beta domain); the interaction, leads to polyubiquitination and subsequent HIF1A proteasomal degradation. During hypoxia, sumoylated HIF1A also binds VHL; the interaction promotes the ubiquitination of HIF1A. Interacts with SENP1; the interaction desumoylates HIF1A resulting in stabilization and activation of transcription. Interacts (via the ODD domain) with NAA10; the interaction appears not to acetylate HIF1A nor have any affect on protein stability, during hypoxia. Interacts with RWDD3; the interaction enhances HIF1A sumoylation. Interacts with TSGA10. Interacts with HIF3A. Interacts with RORA (via the DNA binding domain); the interaction enhances HIF1A transcription under hypoxia through increasing protein stability. Interaction with PSMA7 inhibits the transactivation activity of HIF1A under both normoxic and hypoxia-mimicking conditions. Interacts with USP20. Interacts with RACK1; promotes HIF1A ubiquitination and proteasome-mediated degradation. Interacts (via N-terminus) with USP19. Interacts with SIRT2. Interacts (deacetylated form) with EGLN1. Interacts with CBFA2T3. Interacts with HSP90AA1 and HSP90AB1. Interacts with DCUN1D1; this interaction increases the interaction between VHL and DCUN1D1. Interacts with HIF1AN. Post-translationally, S-nitrosylation of Cys-793 may be responsible for increased recruitment of p300 coactivator necessary for transcriptional activity of HIF-1 complex. In terms of processing, acetylation of Lys-533 by ARD1 increases interaction with VHL and stimulates subsequent proteasomal degradation. Deacetylation of Lys-702 by SIRT2 increases its interaction with and hydroxylation by EGLN1 thereby inactivating HIF1A activity by inducing its proteasomal degradation. Requires phosphorylation for DNA-binding. Phosphorylation at Ser-248 by CSNK1D/CK1 represses kinase activity and impairs ARNT binding. Phosphorylation by GSK3-beta and PLK3 promote degradation by the proteasome. Post-translationally, the iron and 2-oxoglutarate dependent 3-hydroxylation of asparagine is (S) stereospecific within HIF CTAD domains. In terms of processing, sumoylated; with SUMO1 under hypoxia. Sumoylation is enhanced through interaction with RWDD3. Both sumoylation and desumoylation seem to be involved in the regulation of its stability during hypoxia. Sumoylation can promote either its stabilization or its VHL-dependent degradation by promoting hydroxyproline-independent HIF1A-VHL complex binding, thus leading to HIF1A ubiquitination and proteasomal degradation. Desumoylation by SENP1 increases its stability amd transcriptional activity. There is a disaccord between various publications on the effect of sumoylation and desumoylation on its stability and transcriptional activity. In normoxia, is hydroxylated on Pro-403 and Pro-565 in the oxygen-dependent degradation domain (ODD) by EGLN1/PHD2 and EGLN2/PHD1. EGLN3/PHD3 has also been shown to hydroxylate Pro-565. The hydroxylated prolines promote interaction with VHL, initiating rapid ubiquitination and subsequent proteasomal degradation. Deubiquitinated by USP20. Under hypoxia, proline hydroxylation is impaired and ubiquitination is attenuated, resulting in stabilization. In normoxia, is hydroxylated on Asn-796 by HIF1AN, thus abrogating interaction with CREBBP and EP300 and preventing transcriptional activation. Repressed by iron ion, via Fe(2+) prolyl hydroxylase (PHD) enzymes-mediated hydroxylation and subsequent proteasomal degradation.

It is found in the cytoplasm. It localises to the nucleus. The protein localises to the nucleus speckle. With respect to regulation, induced by reactive oxygen species (ROS). In terms of biological role, functions as a master transcriptional regulator of the adaptive response to hypoxia. Under hypoxic conditions, activates the transcription of over 40 genes, including erythropoietin, glucose transporters, glycolytic enzymes, vascular endothelial growth factor, HILPDA, and other genes whose protein products increase oxygen delivery or facilitate metabolic adaptation to hypoxia. Plays an essential role in embryonic vascularization, tumor angiogenesis and pathophysiology of ischemic disease. Heterodimerizes with ARNT; heterodimer binds to core DNA sequence 5'-TACGTG-3' within the hypoxia response element (HRE) of target gene promoters. Activation requires recruitment of transcriptional coactivators such as CREBBP and EP300. Activity is enhanced by interaction with NCOA1 and/or NCOA2. Interaction with redox regulatory protein APEX1 seems to activate CTAD and potentiates activation by NCOA1 and CREBBP. Involved in the axonal distribution and transport of mitochondria in neurons during hypoxia. This chain is Hypoxia-inducible factor 1-alpha (HIF1A), found in Eospalax fontanierii baileyi (Plateau zokor).